The following is a 93-amino-acid chain: MTKSELIEQLCSKKPQLSAKQVEDTVKEILEQMATTLEGGDRIEIRGFGSFSLHYREPRLGRNPKTGDKVELDGKFVPHFKPGKELRERVNYS.

This sequence belongs to the bacterial histone-like protein family. As to quaternary structure, heterodimer of an alpha and a beta chain.

Its function is as follows. This protein is one of the two subunits of integration host factor, a specific DNA-binding protein that functions in genetic recombination as well as in transcriptional and translational control. This Aliivibrio fischeri (strain ATCC 700601 / ES114) (Vibrio fischeri) protein is Integration host factor subunit beta.